Reading from the N-terminus, the 103-residue chain is Large ribosomal subunit protein uL24 (103 aa).

Belongs to the universal ribosomal protein uL24 family. As to quaternary structure, part of the 50S ribosomal subunit.

Its function is as follows. One of two assembly initiator proteins, it binds directly to the 5'-end of the 23S rRNA, where it nucleates assembly of the 50S subunit. One of the proteins that surrounds the polypeptide exit tunnel on the outside of the subunit. This is Large ribosomal subunit protein uL24 from Alkaliphilus metalliredigens (strain QYMF).